The chain runs to 118 residues: Protein TusC (118 aa).

The protein belongs to the DsrF/TusC family. In terms of assembly, heterohexamer, formed by a dimer of trimers. The hexameric TusBCD complex contains 2 copies each of TusB, TusC and TusD. The TusBCD complex interacts with TusE.

The protein localises to the cytoplasm. Functionally, part of a sulfur-relay system required for 2-thiolation of 5-methylaminomethyl-2-thiouridine (mnm(5)s(2)U) at tRNA wobble positions. The protein is Protein TusC of Salmonella agona (strain SL483).